Reading from the N-terminus, the 292-residue chain is uncharacterized protein (292 aa).

The 58-residue stretch at 1–58 folds into the HTH lysR-type domain; sequence MEWEQLEYFQTLARMQHVTKAAKSLSITQPALSRSIARLENHLGVPLFDRQGRSISLN. Residues 18 to 37 constitute a DNA-binding region (H-T-H motif); that stretch reads VTKAAKSLSITQPALSRSIA.

The protein belongs to the LysR transcriptional regulatory family.

This is an uncharacterized protein from Bacillus subtilis (strain 168).